The primary structure comprises 365 residues: Phospho-N-acetylmuramoyl-pentapeptide-transferase (365 aa).

10 helical membrane passes run 22-42 (YISV…LALG), 74-94 (TMGG…WGDL), 95-115 (TSIY…IGFF), 134-154 (KFAL…YLLS), 168-188 (SLYI…IING), 201-221 (GLAI…AYIE), 240-260 (LAEV…FLWF), 267-287 (VFMG…IAVM), 292-312 (LIFF…MLQV), and 342-362 (KVVI…LAAI).

Belongs to the glycosyltransferase 4 family. MraY subfamily. The cofactor is Mg(2+).

The protein localises to the cell inner membrane. It carries out the reaction UDP-N-acetyl-alpha-D-muramoyl-L-alanyl-gamma-D-glutamyl-meso-2,6-diaminopimeloyl-D-alanyl-D-alanine + di-trans,octa-cis-undecaprenyl phosphate = di-trans,octa-cis-undecaprenyl diphospho-N-acetyl-alpha-D-muramoyl-L-alanyl-D-glutamyl-meso-2,6-diaminopimeloyl-D-alanyl-D-alanine + UMP. Its pathway is cell wall biogenesis; peptidoglycan biosynthesis. Catalyzes the initial step of the lipid cycle reactions in the biosynthesis of the cell wall peptidoglycan: transfers peptidoglycan precursor phospho-MurNAc-pentapeptide from UDP-MurNAc-pentapeptide onto the lipid carrier undecaprenyl phosphate, yielding undecaprenyl-pyrophosphoryl-MurNAc-pentapeptide, known as lipid I. The protein is Phospho-N-acetylmuramoyl-pentapeptide-transferase of Francisella tularensis subsp. mediasiatica (strain FSC147).